Consider the following 180-residue polypeptide: Major urinary protein 1 (180 aa).

The first 18 residues, 1–18, serve as a signal peptide directing secretion; that stretch reads MKMLLLLCLGLTLVCVHA. An intrachain disulfide couples Cys-82 to Cys-175.

This sequence belongs to the calycin superfamily. Lipocalin family. In terms of tissue distribution, abundant in the urine of adult male mice but absent from that of females.

Its subcellular location is the secreted. In terms of biological role, binds pheromones that are released from drying urine of males. These pheromones affect the sexual behavior of females. This Mus musculus (Mouse) protein is Major urinary protein 1 (Mup1).